A 595-amino-acid chain; its full sequence is P2X purinoceptor 7 (595 aa).

Topologically, residues 1-22 are cytoplasmic; the sequence is MPACCSWNDVLQYETNKVTRIQ. Residue cysteine 4 is the site of S-palmitoyl cysteine attachment. The chain crosses the membrane as a helical span at residues 23-46; the sequence is STNYGTVKWVLHMIVFSYISFALV. Over 47–328 the chain is Extracellular; that stretch reads SDKLYQRKEP…ILVFGTGGKF (282 aa). Residue asparagine 74 is glycosylated (N-linked (GlcNAc...) asparagine). Cystine bridges form between cysteine 119-cysteine 168, cysteine 129-cysteine 152, and cysteine 135-cysteine 162. An ADP-ribosylarginine; by ART2B mark is found at arginine 125 and arginine 133. The N-linked (GlcNAc...) asparagine glycan is linked to asparagine 187. Threonine 189 serves as a coordination point for ATP. 2 N-linked (GlcNAc...) asparagine glycosylation sites follow: asparagine 202 and asparagine 213. Residues cysteine 216 and cysteine 226 are joined by a disulfide bond. A glycan (N-linked (GlcNAc...) asparagine) is linked at asparagine 241. Cysteine 260 and cysteine 269 are disulfide-bonded. 2 residues coordinate ATP: arginine 294 and lysine 311. Residues 329 to 353 form a helical membrane-spanning segment; sequence DIIQLVVYIGSTLSYFGLATVCIDL. Serine 342 lines the Na(+) pocket. The Cytoplasmic portion of the chain corresponds to 354 to 595; that stretch reads LINTYSSAFC…GQYSGFKYPY (242 aa). A C-cys anchor region spans residues 360–377; sequence SAFCRSGVYPYCKCCEPC. 3 S-palmitoyl cysteine lipidation sites follow: cysteine 363, cysteine 374, and cysteine 377. At serine 390 the chain carries Phosphoserine. The cytoplasmic ballast stretch occupies residues 395 to 595; sequence KPTLKYVSFV…GQYSGFKYPY (201 aa). Residues cysteine 479, cysteine 499, and cysteine 506 each contribute to the Zn(2+) site. GTP is bound by residues arginine 546, histidine 547, tyrosine 550, and alanine 567. Cysteine 572 contacts Zn(2+). The GTP site is built by lysine 583, serine 589, and glycine 590.

The protein belongs to the P2X receptor family. Homotrimers. Interacts with LAMA3, ITGB2, ACTB, ACTN4, SVIL, MPP3, HSPA1, HSPCB, HSPA8, PIK230 and PTPRB. Interacts (via C-terminus) with EMP2. Phosphorylation results in its inactivation. Post-translationally, ADP-ribosylation at Arg-125 is necessary and sufficient to activate P2RX7 and gate the channel. In terms of processing, palmitoylation of several cysteines in the C-terminal cytoplasmic tail is required for efficient localization to cell surface. Palmitoylation prevents channel desensitization by physically anchoring the palmitoylated groups to the membrane.

The protein localises to the cell membrane. The catalysed reaction is Ca(2+)(in) = Ca(2+)(out). The enzyme catalyses K(+)(in) = K(+)(out). It catalyses the reaction Na(+)(in) = Na(+)(out). With respect to regulation, activated by high extracellular ATP levels (0.1-2.5 mM). The synthetic analog 2'(3')-O-(4-benzoylbenzoyl)ATP (BzATP) acts as a potent agonist. Does not undergo desensitization, instead, undergoes a facilitation process where currents progressively increase with repetitive or prolonged agonist application. Palmitoylation prevents channel desensitization. The permeability of the P2RX7 channel is modulated by the amount of cholesterol in the plasma membrane. Its function is as follows. ATP-gated nonselective transmembrane cation channel. Requires high millimolar-range concentrations of ATP to become activated. ATP binding trigers the rapid opening of the channel and allows Na(+) and Ca(2+) influx and K(+) efflux. Has also the ability to form a large pore in the cell membrane, allowing the passage of large cationic molecules. In microglia, may mediate NADPH transport across the plasma membrane. In immune cells, P2RX7 acts as a molecular sensor in pathological inflammatory states by detecting and responding to high local concentrations of extracellar ATP. In microglial cells, P2RX7 activation leads to the release of pro-inflammatory cytokines, such as IL-1beta and IL-18, through the activation of the NLRP3 inflammasome and caspase-1. Cooperates with KCNK6 to activate NLRP3 inflammasome. Activates death pathways leading to apoptosis and autophagy. Activates death pathways leading to pyroptosis. This Mus musculus (Mouse) protein is P2X purinoceptor 7 (P2rx7).